The primary structure comprises 302 residues: Oxygen-dependent coproporphyrinogen-III oxidase (302 aa).

Ser-94 contacts substrate. Residues His-98 and His-108 each contribute to the a divalent metal cation site. The Proton donor role is filled by His-108. Residue 110 to 112 (NVR) coordinates substrate. Residues His-147 and His-177 each coordinate a divalent metal cation. Residues 242–277 (YVEFNLVWDRGTLFGLQSGGRTESILMSMPPLVRWE) form an important for dimerization region. 260 to 262 (GGR) is a substrate binding site.

This sequence belongs to the aerobic coproporphyrinogen-III oxidase family. As to quaternary structure, homodimer. It depends on a divalent metal cation as a cofactor.

The protein localises to the cytoplasm. The enzyme catalyses coproporphyrinogen III + O2 + 2 H(+) = protoporphyrinogen IX + 2 CO2 + 2 H2O. It functions in the pathway porphyrin-containing compound metabolism; protoporphyrin-IX biosynthesis; protoporphyrinogen-IX from coproporphyrinogen-III (O2 route): step 1/1. Its function is as follows. Involved in the heme biosynthesis. Catalyzes the aerobic oxidative decarboxylation of propionate groups of rings A and B of coproporphyrinogen-III to yield the vinyl groups in protoporphyrinogen-IX. The sequence is that of Oxygen-dependent coproporphyrinogen-III oxidase from Chromobacterium violaceum (strain ATCC 12472 / DSM 30191 / JCM 1249 / CCUG 213 / NBRC 12614 / NCIMB 9131 / NCTC 9757 / MK).